We begin with the raw amino-acid sequence, 675 residues long: Polyamine deacetylase HDAC10 (675 aa).

A substrate-binding site is contributed by aspartate 22. The Substrate specificity signature appears at 23–26 (PACE). Aspartate 94 contacts substrate. Histidine 137 functions as the Proton donor/acceptor in the catalytic mechanism. Aspartate 174, histidine 176, and aspartate 267 together coordinate Zn(2+). Tyrosine 307 is a binding site for substrate. Residues 362 to 399 (LAQSETNPKRPRLDATNGGPKESSEPASESNPKKTAQD) form a disordered region.

It belongs to the histone deacetylase family. HD type 2 subfamily.

The protein resides in the cytoplasm. It is found in the nucleus. The catalysed reaction is N(8)-acetylspermidine + H2O = spermidine + acetate. It carries out the reaction N-acetylputrescine + H2O = putrescine + acetate. The enzyme catalyses N-acetylcadaverine + H2O = cadaverine + acetate. In terms of biological role, polyamine deacetylase (PDAC), which acts preferentially on N(8)-acetylspermidine, and also on acetylcadaverine and acetylputrescine. Exhibits attenuated catalytic activity toward N(1),N(8)-diacetylspermidine and very low activity, if any, toward N(1)-acetylspermidine. Has a very weak lysine deacetylase, if any. The chain is Polyamine deacetylase HDAC10 (hdac10) from Danio rerio (Zebrafish).